Consider the following 544-residue polypeptide: Dynein intermediate chain 1 (544 aa).

6 WD repeats span residues 241-281, 289-330, 342-387, 402-441, 461-501, and 506-544; these read KARS…YPVS, GHLE…RPSE, SQCI…QPSN, VMTSNSQNVFLEKNKDFALTSSFDWTVRLWQCSPSRNQHE, THKA…EAPV, and PDGKPLNKIAWQPEKRNLACGGLNGNVHIYKHLSPNLAN.

The protein belongs to the dynein intermediate chain family.

It is found in the cytoplasm. In terms of biological role, has a role in meiotic nuclear divsion where it promotes the movement of 'horsetails'. The sequence is that of Dynein intermediate chain 1 (dic1) from Schizosaccharomyces pombe (strain 972 / ATCC 24843) (Fission yeast).